Reading from the N-terminus, the 177-residue chain is NAD(P)H-quinone oxidoreductase subunit 6, chloroplastic (177 aa).

5 helical membrane passes run 10 to 30 (IFLV…VLLT), 32 to 52 (PVYS…FHIP), 61 to 81 (AQLL…VMFM), 92 to 112 (LWTV…FSLI), and 152 to 172 (FYLP…GAIA).

The protein belongs to the complex I subunit 6 family. As to quaternary structure, NDH is composed of at least 16 different subunits, 5 of which are encoded in the nucleus.

Its subcellular location is the plastid. It localises to the chloroplast thylakoid membrane. It catalyses the reaction a plastoquinone + NADH + (n+1) H(+)(in) = a plastoquinol + NAD(+) + n H(+)(out). The enzyme catalyses a plastoquinone + NADPH + (n+1) H(+)(in) = a plastoquinol + NADP(+) + n H(+)(out). Functionally, NDH shuttles electrons from NAD(P)H:plastoquinone, via FMN and iron-sulfur (Fe-S) centers, to quinones in the photosynthetic chain and possibly in a chloroplast respiratory chain. The immediate electron acceptor for the enzyme in this species is believed to be plastoquinone. Couples the redox reaction to proton translocation, and thus conserves the redox energy in a proton gradient. This Illicium oligandrum (Star anise) protein is NAD(P)H-quinone oxidoreductase subunit 6, chloroplastic (ndhG).